The primary structure comprises 128 residues: Large ribosomal subunit protein bL17 (128 aa).

The protein belongs to the bacterial ribosomal protein bL17 family. In terms of assembly, part of the 50S ribosomal subunit. Contacts protein L32.

The sequence is that of Large ribosomal subunit protein bL17 from Streptococcus pneumoniae serotype 4 (strain ATCC BAA-334 / TIGR4).